Here is a 314-residue protein sequence, read N- to C-terminus: MRALFYKDGKLFTDNNFLNPVSDDNPAYEVLQHVKIPTHLTDVVVYEQTWEEALTRLIFVGSDSKGRRQYFYGKMHVQNRNAKRDRIFVRVYNVMKRINCFINKNIKKSSTDSNYQLAVFMLMETMFFIRFGKMKYLKENETVGLLTLKNKHIEISPDEIVIKFVGKDKVSHEFVVHKSNRLYKPLLKLTDDSSPEEFLFNKLSERKVYECIKQFGIRIKDLRTYGVNYTFLYNFWTNVKSISPLPSPKKLIALTIKQTAEVVGHTPSISKRAYMATTILEMVKDKNFLDVVSKTTFDEFLSIVVDHVKSSTDG.

The Topo IB-type catalytic domain occupies 77–314 (VQNRNAKRDR…VDHVKSSTDG (238 aa)). The active-site O-(3'-phospho-DNA)-tyrosine intermediate is the tyrosine 274.

Belongs to the type IB topoisomerase family.

It catalyses the reaction ATP-independent breakage of single-stranded DNA, followed by passage and rejoining.. In terms of biological role, releases the supercoiling and torsional tension of DNA introduced during the DNA replication and transcription by transiently cleaving and rejoining one strand of the DNA duplex. Introduces a single-strand break via transesterification at the specific target site 5'-[CT]CCTTp site in duplex DNA. The scissile phosphodiester is attacked by the catalytic tyrosine of the enzyme, resulting in the formation of a DNA-(3'-phosphotyrosyl)-enzyme intermediate and the expulsion of a 5'-OH DNA strand. The free DNA strand then undergoes passage around the unbroken strand thus removing DNA supercoils. Finally, in the religation step, the DNA 5'-OH attacks the covalent intermediate to expel the active-site tyrosine and restore the DNA phosphodiester backbone. This Vaccinia virus (strain Ankara) (VACV) protein is DNA topoisomerase 1B (TOP1).